Here is a 223-residue protein sequence, read N- to C-terminus: 2-C-methyl-D-erythritol 4-phosphate cytidylyltransferase (223 aa).

The protein belongs to the IspD/TarI cytidylyltransferase family. IspD subfamily.

The catalysed reaction is 2-C-methyl-D-erythritol 4-phosphate + CTP + H(+) = 4-CDP-2-C-methyl-D-erythritol + diphosphate. The protein operates within isoprenoid biosynthesis; isopentenyl diphosphate biosynthesis via DXP pathway; isopentenyl diphosphate from 1-deoxy-D-xylulose 5-phosphate: step 2/6. In terms of biological role, catalyzes the formation of 4-diphosphocytidyl-2-C-methyl-D-erythritol from CTP and 2-C-methyl-D-erythritol 4-phosphate (MEP). This is 2-C-methyl-D-erythritol 4-phosphate cytidylyltransferase from Synechococcus sp. (strain WH7803).